We begin with the raw amino-acid sequence, 73 residues long: Large ribosomal subunit protein bL31 (73 aa).

It belongs to the bacterial ribosomal protein bL31 family. Type A subfamily. In terms of assembly, part of the 50S ribosomal subunit.

Its function is as follows. Binds the 23S rRNA. This chain is Large ribosomal subunit protein bL31, found in Cereibacter sphaeroides (strain ATCC 17029 / ATH 2.4.9) (Rhodobacter sphaeroides).